Consider the following 410-residue polypeptide: MFILLVLVTGVSAFTTPTVVHTGKVSESPITSEKPTVHGDNCQFRGREFKSELRLEGEPVVLRCPLAPHSDISSSSHSFLTWSKLDSSQLIPRDEPRMWVKGNILWILPAVQQDSGTYICTFRNASHCEQMSVELKVFKNTEASLPHVSYLQISALSTTGLLVCPDLKEFISSNADGKIQWYKGAILLDKGNKEFLSAGDPTRLLISNTSMDDAGYYRCVMTFTYNGQEYNITRNIELRVKGTTTEPIPVIISPLETIPASLGSRLIVPCKVFLGTGTSSNTIVWWLANSTFISAAYPRGRVTEGLHHQYSENDENYVEVSLIFDPVTREDLHTDFKCVASNPRSSQSLHTTVKEVSSTFSWSIALAPLSLIILVVGAIWMRRRCKRRAGKTYGLTKLRTDNQDFPSSPN.

The signal sequence occupies residues 1–13 (MFILLVLVTGVSA). At 14-355 (FTTPTVVHTG…SQSLHTTVKE (342 aa)) the chain is on the extracellular side. 3 consecutive Ig-like C2-type domains span residues 35–136 (PTVH…VELK), 146–237 (PHVS…RNIE), and 249–357 (PVII…KEVS). 3 disulfide bridges follow: Cys-42/Cys-128, Cys-64/Cys-120, and Cys-164/Cys-219. 4 N-linked (GlcNAc...) asparagine glycosylation sites follow: Asn-124, Asn-208, Asn-231, and Asn-289. A disulfide bridge connects residues Cys-270 and Cys-338. A helical transmembrane segment spans residues 356-381 (VSSTFSWSIALAPLSLIILVVGAIWM). The Cytoplasmic segment spans residues 382–410 (RRRCKRRAGKTYGLTKLRTDNQDFPSSPN).

Belongs to the interleukin-1 receptor family. Associates with IL1RAP to form a non-signaling interleukin-1 receptor complex. A soluble form (sIL1R2) can also be produced by proteolytic cleavage at the cell surface (shedding) involving a metalloproteinase. In terms of tissue distribution, strongly expressed in B-cells, with levels 21 times higher than IL1R1. In T-cells expressed 5 times more compared with IL1R1.

It localises to the membrane. Its subcellular location is the cell membrane. It is found in the secreted. In terms of biological role, non-signaling receptor for IL1A, IL1B and IL1RN. Reduces IL1B activities. Serves as a decoy receptor by competitive binding to IL1B and preventing its binding to IL1R1. Also modulates cellular response through non-signaling association with IL1RAP after binding to IL1B. IL1R2 (membrane and secreted forms) preferentially binds IL1B and poorly IL1A and IL1RN. The secreted IL1R2 recruits secreted IL1RAP with high affinity; this complex formation may be the dominant mechanism for neutralization of IL1B by secreted/soluble receptors. The protein is Interleukin-1 receptor type 2 (Il1r2) of Mus musculus (Mouse).